Consider the following 107-residue polypeptide: Basic phospholipase A2 sphenotoxin subunit B (107 aa).

Residues Tyr27, Gly29, and Gly31 each contribute to the Ca(2+) site. 5 disulfide bridges follow: Cys28–Cys44, Cys43–Cys91, Cys50–Cys88, Cys57–Cys81, and Cys75–Cys86. Residue His47 is part of the active site. Residue Asp48 participates in Ca(2+) binding. Residue Asp89 is part of the active site.

It belongs to the phospholipase A2 family. Group II subfamily. D49 sub-subfamily. As to quaternary structure, heterodimer of A and B chains; non-covalently linked. The acidic protein (B chain) has phospholipase A2 activity and the A chain weakly inhibits the B chain enzymatic activity but potentiates its lethal potency. Expressed by the venom gland.

The protein localises to the secreted. The enzyme catalyses a 1,2-diacyl-sn-glycero-3-phosphocholine + H2O = a 1-acyl-sn-glycero-3-phosphocholine + a fatty acid + H(+). In terms of biological role, heterodimer A-B: Sphenotoxin is a potent neurotoxin that possesses phospholipase A2 (PLA2) activity. It consists of a non-covalent association of a basic PLA2 subunit B with a non-enzymatic subunit A. Its function is as follows. Monomer B: Not found in vivo. In vitro, potent neurotoxin that possesses phospholipase A2 (PLA2) activity and exerts a lethal action by blocking neuromuscular transmission. Induces paralysis of the hind legs and neuromuscular blockade in mouse phrenic nerve-diaphragm preparations. PLA2 catalyzes the calcium-dependent hydrolysis of the 2-acyl groups in 3-sn-phosphoglycerides. In Ophryacus sphenophrys (Broad-horned pitviper), this protein is Basic phospholipase A2 sphenotoxin subunit B.